A 60-amino-acid polypeptide reads, in one-letter code: Cytotoxin 7 (60 aa).

Intrachain disulfides connect Cys3/Cys21, Cys14/Cys38, Cys42/Cys53, and Cys54/Cys59.

It belongs to the three-finger toxin family. Short-chain subfamily. Type IA cytotoxin sub-subfamily. In terms of assembly, monomer in solution; Homodimer and oligomer in the presence of negatively charged lipids forming a pore with a size ranging between 20 and 30 Angstroms. In terms of tissue distribution, expressed by the venom gland.

It is found in the secreted. The protein localises to the target cell membrane. Its function is as follows. Shows cytolytic activity on many different cells by forming pore in lipid membranes. In vivo, increases heart rate or kills the animal by cardiac arrest. In addition, it binds to heparin with high affinity, interacts with Kv channel-interacting protein 1 (KCNIP1) in a calcium-independent manner, and binds to integrin alpha-V/beta-3 (ITGAV/ITGB3) with moderate affinity. Preferentially binds acidic phospholipids like phosphatidylserine, phosphatidic acid and phosphatidyl glycerol. Has hemolytic activity towards human erythrocytes (EC(50)=0.171 uM) and cytolytic activity towards various cell lines. This chain is Cytotoxin 7, found in Naja naja (Indian cobra).